The following is a 236-amino-acid chain: MRITQLSSQSFAFPSPELALREPNGLLALGGDLSPPRLLAAYERGIFPWFSPGEMILWWSPDPRAVLYPEDLHISRSMRRFLRNCPYRFTLNHAFKDVIRACATLRDEGTWIGDDVQQAYCHLHTLGHAHSVEVWLENELVGGLYGISVGSLFCGESMFSRANNASKSALMVFCHHFTRHGGELIDCQVLNAHTASLGAIEIPRNFFLQQLSQLQFSPLPAECWLPQSLNFSSAMQ.

It belongs to the L/F-transferase family.

It localises to the cytoplasm. The catalysed reaction is N-terminal L-lysyl-[protein] + L-leucyl-tRNA(Leu) = N-terminal L-leucyl-L-lysyl-[protein] + tRNA(Leu) + H(+). The enzyme catalyses N-terminal L-arginyl-[protein] + L-leucyl-tRNA(Leu) = N-terminal L-leucyl-L-arginyl-[protein] + tRNA(Leu) + H(+). It carries out the reaction L-phenylalanyl-tRNA(Phe) + an N-terminal L-alpha-aminoacyl-[protein] = an N-terminal L-phenylalanyl-L-alpha-aminoacyl-[protein] + tRNA(Phe). Functions in the N-end rule pathway of protein degradation where it conjugates Leu, Phe and, less efficiently, Met from aminoacyl-tRNAs to the N-termini of proteins containing an N-terminal arginine or lysine. The protein is Leucyl/phenylalanyl-tRNA--protein transferase of Yersinia enterocolitica serotype O:8 / biotype 1B (strain NCTC 13174 / 8081).